A 199-amino-acid polypeptide reads, in one-letter code: Recombination protein RecR (199 aa).

The segment at C58–C73 adopts a C4-type zinc-finger fold. Residues G81 to P176 form the Toprim domain.

Belongs to the RecR family.

In terms of biological role, may play a role in DNA repair. It seems to be involved in an RecBC-independent recombinational process of DNA repair. It may act with RecF and RecO. This is Recombination protein RecR from Jannaschia sp. (strain CCS1).